The sequence spans 217 residues: Salivary glue protein Sgs-3 (217 aa).

The signal sequence occupies residues 1 to 23 (MKLTIATVLASILLIGFANVANC). Residues 45 to 130 (KSTSTTTTTT…KPTTHSTPKT (86 aa)) are compositionally biased toward low complexity. The segment at 45 to 163 (KSTSTTTTTT…KHTTPTTTTT (119 aa)) is disordered. The segment covering 131–154 (KPTKHTTPKTKPTKHTTPKTKPTK) has biased composition (basic residues).

In Drosophila simulans (Fruit fly), this protein is Salivary glue protein Sgs-3 (Sgs3).